Here is a 139-residue protein sequence, read N- to C-terminus: Diuretic hormone 41 (139 aa).

The N-terminal stretch at 1 to 20 is a signal peptide; that stretch reads MMWWALWCAVVVAAGSGVAA. The propeptide occupies 21 to 79; that stretch reads APAPDSLSPLDMVQMDSSAPDDETLYAMSPMAARYSAGAPWLYLLADMPRDSQTGSGRV. Isoleucine 122 is modified (isoleucine amide).

Belongs to the sauvagine/corticotropin-releasing factor/urotensin I family. As to expression, expressed in corpora cardiaca (CC), corpora allata (CA), antennal lobe (AL) and gnathal ganglion (GNG) (at protein level). Expression in CC and CA detected in all animals, in GNG in most animals, expression in AL detected in few animals (at protein level).

The protein localises to the secreted. Functionally, regulation of fluid secretion. This Agrotis ipsilon (Black cutworm moth) protein is Diuretic hormone 41.